Consider the following 64-residue polypeptide: Gallinacin-2 (64 aa).

Positions 1-22 are cleaved as a signal peptide; the sequence is MRILYLLFSLLFLALQVSPGLS. A propeptide spanning residues 23–28 is cleaved from the precursor; that stretch reads SPRRDM. 3 disulfides stabilise this stretch: C31–C57, C36–C51, and C41–C58.

As to expression, expressed in circulating heterophil granulocytes and bone marrow (at protein level). Strong expression in the bone marrow, lung and testis. Moderate expression in the bursa and intestine. Low expression in the cloaca, gall bladder, brain, pancreas, trachea, air sacs and spleen. Expressed in the vagina, ovarian stroma and the theca layer of the ovarian follicle, but not in the granulosa layer of the ovarian follicle.

It localises to the secreted. The protein resides in the cytoplasmic granule. Functionally, potent antibacterial activity against the Gram-negative bacterium E.coli ML-35, and against the Gram-positive bacterium L.monocytogenes EGD. Lacks antifungal activity against C.albicans. This chain is Gallinacin-2 (GAL2), found in Gallus gallus (Chicken).